Here is a 121-residue protein sequence, read N- to C-terminus: Ribonuclease P protein component (121 aa).

Belongs to the RnpA family. Consists of a catalytic RNA component (M1 or rnpB) and a protein subunit.

It carries out the reaction Endonucleolytic cleavage of RNA, removing 5'-extranucleotides from tRNA precursor.. RNaseP catalyzes the removal of the 5'-leader sequence from pre-tRNA to produce the mature 5'-terminus. It can also cleave other RNA substrates such as 4.5S RNA. The protein component plays an auxiliary but essential role in vivo by binding to the 5'-leader sequence and broadening the substrate specificity of the ribozyme. In Chromobacterium violaceum (strain ATCC 12472 / DSM 30191 / JCM 1249 / CCUG 213 / NBRC 12614 / NCIMB 9131 / NCTC 9757 / MK), this protein is Ribonuclease P protein component.